A 218-amino-acid polypeptide reads, in one-letter code: ATP phosphoribosyltransferase (218 aa).

The protein belongs to the ATP phosphoribosyltransferase family. Short subfamily. As to quaternary structure, heteromultimer composed of HisG and HisZ subunits.

It is found in the cytoplasm. It carries out the reaction 1-(5-phospho-beta-D-ribosyl)-ATP + diphosphate = 5-phospho-alpha-D-ribose 1-diphosphate + ATP. It participates in amino-acid biosynthesis; L-histidine biosynthesis; L-histidine from 5-phospho-alpha-D-ribose 1-diphosphate: step 1/9. In terms of biological role, catalyzes the condensation of ATP and 5-phosphoribose 1-diphosphate to form N'-(5'-phosphoribosyl)-ATP (PR-ATP). Has a crucial role in the pathway because the rate of histidine biosynthesis seems to be controlled primarily by regulation of HisG enzymatic activity. The polypeptide is ATP phosphoribosyltransferase (Trichormus variabilis (strain ATCC 29413 / PCC 7937) (Anabaena variabilis)).